Consider the following 115-residue polypeptide: Hydrogenase maturation factor HypA (115 aa).

H2 contacts Ni(2+). C74, C77, C90, and C93 together coordinate Zn(2+).

This sequence belongs to the HypA/HybF family.

Functionally, involved in the maturation of [NiFe] hydrogenases. Required for nickel insertion into the metal center of the hydrogenase. In Desulfosudis oleivorans (strain DSM 6200 / JCM 39069 / Hxd3) (Desulfococcus oleovorans), this protein is Hydrogenase maturation factor HypA.